The sequence spans 465 residues: uncharacterized protein (465 aa).

The region spanning 6–91 (NVTLSNLIDF…LKLKREYLFR (86 aa)) is the RAMA domain. 2 disordered regions span residues 95–377 (TGKN…SNNQ) and 392–465 (YNQQ…KSKS). Over residues 117-137 (PQQQQQQQQQQQQQQQQQQQP) the composition is skewed to low complexity. Positions 156-169 (ETSDQDIDNDDDDA) are enriched in acidic residues. Residues 177–190 (TTTTTTTTTTTTTT) are compositionally biased toward low complexity. The span at 208–220 (PKEKKKEKKENIL) shows a compositional bias: basic and acidic residues. Residues 214–242 (EKKENILTKKKQQSLQYQQQLQLLQRQNS) adopt a coiled-coil conformation. Low complexity predominate over residues 226–263 (QSLQYQQQLQLLQRQNSPPSVSPSSSTSTSSSTSSPAS). The segment covering 264-294 (NQIFNSFGPNSQNHNQYGINYNSQQHQPQQY) has biased composition (polar residues). A compositionally biased stretch (low complexity) spans 295–376 (NNNNNNNNNN…NNNINNNSNN (82 aa)). Over residues 392 to 407 (YNQQNPPKHQYPNNFL) the composition is skewed to polar residues. A compositionally biased stretch (low complexity) spans 424–442 (NQSQNQNQNQNQNQNQNQK). A compositionally biased stretch (basic residues) spans 443-465 (SKSKSKSKSKFKSKSKSKSKSKS).

This is an uncharacterized protein from Dictyostelium discoideum (Social amoeba).